A 200-amino-acid chain; its full sequence is Anthranilate synthase component 2, pyocyanine specific (200 aa).

The Glutamine amidotransferase type-1 domain occupies 2 to 195 (RITLLDNFDS…LLWCGALAVR (194 aa)). 56-58 (GPG) contributes to the L-glutamine binding site. Cys-83 functions as the Nucleophile; for GATase activity in the catalytic mechanism. L-glutamine-binding positions include Gln-87 and 133 to 134 (SL). Active-site for GATase activity residues include His-169 and Glu-171.

As to quaternary structure, heterotetramer consisting of two non-identical subunits: a beta subunit (PhnB) and a large alpha subunit (PhnA).

It carries out the reaction chorismate + L-glutamine = anthranilate + pyruvate + L-glutamate + H(+). It participates in secondary metabolite biosynthesis; pyocyanine biosynthesis. Functionally, part of a heterotetrameric complex that catalyzes the two-step biosynthesis of anthranilate, a precursor for Pseudomonas quinolone signal (2-heptyl-3-hydroxy-4-quinolone; PQS) production which is required to induce the genes for the biosynthesis of the virulence factor pyocyanine (PCN), a characteristic blue-green phenazine pigment produced by P.aeruginosa. In the first step, the glutamine-binding beta subunit (PhnB) of anthranilate synthase (AS) provides the glutamine amidotransferase activity which generates ammonia as a substrate that, along with chorismate, is used in the second step, catalyzed by the large alpha subunit of AS (PhnA) to produce anthranilate. This Pseudomonas aeruginosa (strain ATCC 15692 / DSM 22644 / CIP 104116 / JCM 14847 / LMG 12228 / 1C / PRS 101 / PAO1) protein is Anthranilate synthase component 2, pyocyanine specific.